Consider the following 551-residue polypeptide: E3 SUMO-protein ligase CBX4 (551 aa).

The 59-residue stretch at 11–69 (FAVESIEKKRIRKGRVEYLVKWRGWSPKYNTWEPEENILDPRLLIAFQNRERQEQLMGY) folds into the Chromo domain. Residues K77, K106, K114, and K125 each participate in a glycyl lysine isopeptide (Lys-Gly) (interchain with G-Cter in SUMO2) cross-link. The disordered stretch occupies residues 125–152 (KKHHQYQPHSKERSGKPPPPGKSGKYYY). K149 carries the N6-acetyllysine; alternate modification. K149 participates in a covalent cross-link: Glycyl lysine isopeptide (Lys-Gly) (interchain with G-Cter in SUMO2); alternate. Residues K157, K167, and K178 each participate in a glycyl lysine isopeptide (Lys-Gly) (interchain with G-Cter in SUMO2) cross-link. Residues 172–193 (QYQGGHKEAPSPTCPDLGTKSH) are disordered. Residue S182 is modified to Phosphoserine. Residues K191, K205, K212, K223, K249, K268, K278, and K280 each participate in a glycyl lysine isopeptide (Lys-Gly) (interchain with G-Cter in SUMO2) cross-link. The disordered stretch occupies residues 216 to 244 (GGAGAPGKGSEKGPPNGMTPAPKEAVTGN). Basic and acidic residues-rich tracts occupy residues 281-291 (SGEAAEGEARS), 298-310 (AAEE…DRTF), and 317-332 (SEEK…REEE). Disordered stretches follow at residues 281–399 (SGEA…TVGL) and 430–451 (TPTC…PTAA). Residues K321, K353, and K366 each participate in a glycyl lysine isopeptide (Lys-Gly) (interchain with G-Cter in SUMO2) cross-link. Residues 381–396 (PAHHHHHHHHHHHHHT) show a composition bias toward basic residues. At S463 the chain carries Phosphoserine. K490 participates in a covalent cross-link: Glycyl lysine isopeptide (Lys-Gly) (interchain with G-Cter in SUMO2); alternate. Residue K490 forms a Glycyl lysine isopeptide (Lys-Gly) (interchain with G-Cter in SUMO); alternate linkage.

In terms of assembly, interacts with SUV39H1 and HIPK2. Interacts with CSNK2B. Component of a PRC1-like complex. The composition of the PRC1 complex differs between the PRC1 complex in pluripotent embryonic stem cells containing RNF2, CBX7 and PCGF2, and the PRC1 complex in differentiating cells containing RNF2, CBX2, CBX4 and BMI1. Interacts with RNF2. Interacts (via chromodomain) with histone H3K9Me3 and single-stranded RNA (ssRNA). Interacts with CHTOP. May interact with H3C15 and H3C1. Interacts with PRDM1. In terms of processing, ubiquitinated. Ubiquitination regulates the function of the Polycomb group (PcG) multiprotein PRC1-like complex. Deubiquitinated by USP26. As to expression, expressed in embryoid bodies.

It localises to the nucleus. The protein resides in the nucleus speckle. Its pathway is protein modification; protein sumoylation. Functionally, E3 SUMO-protein ligase that catalyzes sumoylation of target proteins by promoting the transfer of SUMO from the E2 enzyme to the substrate. Involved in the sumoylation of HNRNPK, a p53/TP53 transcriptional coactivator, hence indirectly regulates p53/TP53 transcriptional activation resulting in p21/CDKN1A expression. Component of a Polycomb group (PcG) multiprotein PRC1-like complex, a complex class required to maintain the transcriptionally repressive state of many genes, including Hox genes, throughout development. PcG PRC1 complex acts via chromatin remodeling and modification of histones; it mediates monoubiquitination of histone H2A 'Lys-119', rendering chromatin heritably changed in its expressibility. Binds to histone H3 trimethylated at 'Lys-9' (H3K9me3). Plays a role in the lineage differentiation of the germ layers in embryonic development. This Mus musculus (Mouse) protein is E3 SUMO-protein ligase CBX4 (Cbx4).